A 394-amino-acid chain; its full sequence is Chorismate synthase (394 aa).

2 residues coordinate NADP(+): Arg42 and Arg48. FMN contacts are provided by residues 137-139, 258-259, Gly302, 317-321, and Arg343; these read RAS, QA, and KPIAT.

Belongs to the chorismate synthase family. In terms of assembly, homotetramer. FMNH2 is required as a cofactor.

It carries out the reaction 5-O-(1-carboxyvinyl)-3-phosphoshikimate = chorismate + phosphate. Its pathway is metabolic intermediate biosynthesis; chorismate biosynthesis; chorismate from D-erythrose 4-phosphate and phosphoenolpyruvate: step 7/7. Catalyzes the anti-1,4-elimination of the C-3 phosphate and the C-6 proR hydrogen from 5-enolpyruvylshikimate-3-phosphate (EPSP) to yield chorismate, which is the branch point compound that serves as the starting substrate for the three terminal pathways of aromatic amino acid biosynthesis. This reaction introduces a second double bond into the aromatic ring system. In Streptomyces coelicolor (strain ATCC BAA-471 / A3(2) / M145), this protein is Chorismate synthase.